Here is an 83-residue protein sequence, read N- to C-terminus: Kunitz-type serine protease inhibitor superbin-3 (83 aa).

Residues 1 to 24 (MSSGGLLLLLGLLTLWEVLTPVSS) form the signal peptide. A BPTI/Kunitz inhibitor domain is found at 31 to 81 (CELPADSGSCKGNFQAFYYNPVQHQCLEFIYGGCDGNANNFKTIDECKRTC). Cystine bridges form between cysteine 31–cysteine 81, cysteine 40–cysteine 64, and cysteine 56–cysteine 77.

This sequence belongs to the venom Kunitz-type family. In terms of tissue distribution, expressed by the venom gland.

The protein resides in the secreted. Functionally, serine protease inhibitor. The chain is Kunitz-type serine protease inhibitor superbin-3 from Austrelaps superbus (Lowland copperhead snake).